Reading from the N-terminus, the 413-residue chain is MTTTPLSPSTPSNVQVPDIQGRFGRFGGKYVPETLMPALAELETAYQQYRNDPGFQAELQQLLRDYVGRATPLYFAERLTAHYARPDGTGAQIYLKREDLNHTGAHKINNALGQVLLAKRMGKQRIIAETGAGQHGVATATVCARFGLECVIYMGVHDMERQALNVFRMRLMGAEVRPVAAGTGTLKDATSEAIRDWVTNVETTHYILGSVAGPHPYPMMVRDFHAVIGQETRAQALEKWGGLPDILLACVGGGSNAMGLFYEFVNESSIKLIGVEAAGEGVNTEKHAATLTKGRVGVLHGAMSYLLQDEDGQVIEAHSISAGLDYPGVGPEHSYLKDVGRAEYYSVTDEEALAAFQRLSRLEGIIPALETAHAIAYLETLCPQLDGSPRIVINCSGRGDKDVQTVAKFLIPQ.

N6-(pyridoxal phosphate)lysine is present on K107.

Belongs to the TrpB family. In terms of assembly, tetramer of two alpha and two beta chains. Pyridoxal 5'-phosphate serves as cofactor.

It catalyses the reaction (1S,2R)-1-C-(indol-3-yl)glycerol 3-phosphate + L-serine = D-glyceraldehyde 3-phosphate + L-tryptophan + H2O. It participates in amino-acid biosynthesis; L-tryptophan biosynthesis; L-tryptophan from chorismate: step 5/5. In terms of biological role, the beta subunit is responsible for the synthesis of L-tryptophan from indole and L-serine. This is Tryptophan synthase beta chain 2 (trpB2) from Nostoc sp. (strain PCC 7120 / SAG 25.82 / UTEX 2576).